We begin with the raw amino-acid sequence, 117 residues long: Immunoglobulin lambda variable 7-46 (117 aa).

Residues 1 to 19 (MAWTPLFLFLLTCCPGSNS) form the signal peptide. The interval 20–44 (QAVVTQEPSLTVSPGGTVTLTCGSS) is framework-1. An Ig-like domain is found at 20-117 (QAVVTQEPSL…YCLLSYSGAR (98 aa)). Cys-41 and Cys-109 form a disulfide bridge. The interval 45-53 (TGAVTSGHY) is complementarity-determining-1. The segment at 54 to 70 (PYWFQQKPGQAPRTLIY) is framework-2. The segment at 71 to 73 (DTS) is complementarity-determining-2. The tract at residues 74 to 109 (NKHSWTPARFSGSLLGGKAALTLLGAQPEDEAEYYC) is framework-3. The segment at 110-117 (LLSYSGAR) is complementarity-determining-3.

As to quaternary structure, immunoglobulins are composed of two identical heavy chains and two identical light chains; disulfide-linked.

It localises to the secreted. It is found in the cell membrane. Functionally, v region of the variable domain of immunoglobulin light chains that participates in the antigen recognition. Immunoglobulins, also known as antibodies, are membrane-bound or secreted glycoproteins produced by B lymphocytes. In the recognition phase of humoral immunity, the membrane-bound immunoglobulins serve as receptors which, upon binding of a specific antigen, trigger the clonal expansion and differentiation of B lymphocytes into immunoglobulins-secreting plasma cells. Secreted immunoglobulins mediate the effector phase of humoral immunity, which results in the elimination of bound antigens. The antigen binding site is formed by the variable domain of one heavy chain, together with that of its associated light chain. Thus, each immunoglobulin has two antigen binding sites with remarkable affinity for a particular antigen. The variable domains are assembled by a process called V-(D)-J rearrangement and can then be subjected to somatic hypermutations which, after exposure to antigen and selection, allow affinity maturation for a particular antigen. This Homo sapiens (Human) protein is Immunoglobulin lambda variable 7-46.